The chain runs to 444 residues: Phosphoglucosamine mutase (444 aa).

The Phosphoserine intermediate role is filled by Ser-99. Residues Ser-99, Asp-242, Asp-244, and Asp-246 each contribute to the Mg(2+) site. Ser-99 carries the post-translational modification Phosphoserine.

Belongs to the phosphohexose mutase family. Mg(2+) serves as cofactor. Post-translationally, activated by phosphorylation.

The catalysed reaction is alpha-D-glucosamine 1-phosphate = D-glucosamine 6-phosphate. Functionally, catalyzes the conversion of glucosamine-6-phosphate to glucosamine-1-phosphate. This Aliarcobacter butzleri (strain RM4018) (Arcobacter butzleri) protein is Phosphoglucosamine mutase.